Consider the following 147-residue polypeptide: Large ribosomal subunit protein bL9 (147 aa).

This sequence belongs to the bacterial ribosomal protein bL9 family.

Functionally, binds to the 23S rRNA. The chain is Large ribosomal subunit protein bL9 from Marinomonas sp. (strain MWYL1).